Consider the following 345-residue polypeptide: Isopentenyl-diphosphate delta-isomerase (345 aa).

Residue 6-7 coordinates substrate; sequence RK. Residues 63–65, serine 93, and asparagine 122 contribute to the FMN site; that span reads SMT. 93–95 provides a ligand contact to substrate; that stretch reads SQR. Glutamine 156 contributes to the substrate binding site. Glutamate 157 lines the Mg(2+) pocket. FMN contacts are provided by residues lysine 188, threonine 218, 265–267, and 286–287; these read GLR and AL.

The protein belongs to the IPP isomerase type 2 family. Homooctamer. Dimer of tetramers. FMN is required as a cofactor. The cofactor is NADPH. Requires Mg(2+) as cofactor.

Its subcellular location is the cytoplasm. The catalysed reaction is isopentenyl diphosphate = dimethylallyl diphosphate. Its function is as follows. Involved in the biosynthesis of isoprenoids. Catalyzes the 1,3-allylic rearrangement of the homoallylic substrate isopentenyl (IPP) to its allylic isomer, dimethylallyl diphosphate (DMAPP). The sequence is that of Isopentenyl-diphosphate delta-isomerase from Archaeoglobus fulgidus (strain ATCC 49558 / DSM 4304 / JCM 9628 / NBRC 100126 / VC-16).